The primary structure comprises 200 residues: Recombination protein RecR (200 aa).

The C4-type zinc-finger motif lies at 57-72 (CRQCRTLTEQELCPQC). The Toprim domain occupies 80–175 (TQLCVVEGPT…AATRIAHGVP (96 aa)).

This sequence belongs to the RecR family.

May play a role in DNA repair. It seems to be involved in an RecBC-independent recombinational process of DNA repair. It may act with RecF and RecO. The polypeptide is Recombination protein RecR (Pseudomonas putida (strain GB-1)).